We begin with the raw amino-acid sequence, 446 residues long: Alpha-galacturonidase (446 aa).

10 to 72 is a binding site for NAD(+); sequence IKIAYIGGGS…GRWRYEAVST (63 aa). Asn151 provides a ligand contact to substrate. Cys173 lines the Mn(2+) pocket. His174 acts as the Proton donor in catalysis. Mn(2+) is bound at residue His210.

Belongs to the glycosyl hydrolase 4 family. Homotetramer. It depends on NAD(+) as a cofactor. The cofactor is Mn(2+).

It catalyses the reaction [(1-&gt;4)-alpha-D-galacturonosyl](n) + H2O = alpha-D-galacturonate + [(1-&gt;4)-alpha-D-galacturonosyl](n-1). Functionally, alpha-galacturonidase able to catalyze the hydrolysis of the chromogenic substrate p-nitrophenyl-alpha-D-galacturonic acid (pNPalphaGalUA), and of the probable natural substrate alpha-1,4-di-galacturonate (GalUA(2)). Can neither hydrolyze pNPbetaGalUA, nor the stereoisomeric pNPalphaGlcUA. Does not display alpha- or beta-glucosidase activity as it fails to hydrolyze melibiose, raffinose, lactose and the chromogenic analogs, pNPalphaGal and pNPbetaGal. Cannot use the following compounds as substrates: pNP-N-acetyl-alpha- and beta-D-galactosaminide, pNP-N-acetyl-alpha- and beta-D-glucosaminide, pNP-alpha-L- and beta-L-arabinopyranoside, pNP-alpha- and beta-D-glucuronide, pNP-alpha- and beta-D-glucopyranoside, pNP-alpha- and beta-D-glucopyranoside 6-phosphate, pNP-alpha-D-galactopyranoside 6-phosphate and oNP-beta-D-galactopyranoside 6-phosphate. This Bacillus subtilis (strain 168) protein is Alpha-galacturonidase (lplD).